The following is a 619-amino-acid chain: MPIQVLPPQLANQIAAGEVVERPASVVKELVENSLDAGATRIDIDIERGGAKLIRIRDNGSGIKKDELALALARHATSKIASLDDLEAIISLGFRGEALASISSVARLTLTSRTAEQQEAWQAYAEGRDQAVTVKPAAHPVGTTLEVLDLFYNTPARRKFMRTEKTEFGHIDEVVRRIALARFDVTINLSHNGKVMRQYRAVAQDGQRERRLGTICGAAFLEHALAIEWQHGDLTLRGWVADPLHTTPALAEIQYCYVNGRMMRDRLINHAIRQACEDKLGADQQPAFVLYLEIDPHQVDVNVHPAKHEVRFHQSRLVHDFIYQGVLSVLQQQLDAPLAEKDDPPAPRPMPENRIAAGGNQFARPAEAREPATRFSITPSREPAASSGKPGGASWPHAQPGYQKQQGALYRQLLDTPTSPKPALQPPAAAELAGHSQSFGRVLTIVGGDCALLEREGGLALLSLTVAERWLRQAQLTPGAEAVCAQPLLIPLRLKVTEGEKQALAAAQPALAQLGIDVHTDALHVTVRAVPLPLRQQNLQILIPELIGYLAQQNAFDVGNIAQWMARNLTSEQTSWNMAQAIALLADVERLCPQLVRTPPGGLLQPVDLHSAMNALKDE.

A disordered region spans residues 339 to 400; the sequence is AEKDDPPAPR…GGASWPHAQP (62 aa).

This sequence belongs to the DNA mismatch repair MutL/HexB family.

In terms of biological role, this protein is involved in the repair of mismatches in DNA. It is required for dam-dependent methyl-directed DNA mismatch repair. May act as a 'molecular matchmaker', a protein that promotes the formation of a stable complex between two or more DNA-binding proteins in an ATP-dependent manner without itself being part of a final effector complex. The protein is DNA mismatch repair protein MutL of Klebsiella pneumoniae subsp. pneumoniae (strain ATCC 700721 / MGH 78578).